Consider the following 484-residue polypeptide: TPR repeat-containing protein YvcD (484 aa).

TPR repeat units lie at residues 21-54 (GQYFFHKGLKAYKERNLKRASKLIQRAVHLEPED), 55-88 (SEMLSQLAVIYSEMGQYQESNDLLDYIMANLEAE), and 187-220 (WSAYNNLALAYFYSGNVVKAKQTAYEVLSHNEGN).

This Bacillus subtilis (strain 168) protein is TPR repeat-containing protein YvcD (yvcD).